The primary structure comprises 707 residues: Nucleolin (707 aa).

The tract at residues Met1–Pro308 is disordered. N6-acetyllysine occurs at positions 9, 15, and 16. A compositionally biased stretch (acidic residues) spans Val24–Val46. 4 positions are modified to phosphoserine: Ser28, Ser34, Ser40, and Ser41. Positions Ala56–Thr92 are enriched in low complexity. Repeat unit 1 spans residues Thr58 to Val65. An 8 X 8 AA tandem repeats of X-T-P-X-K-K-X-X region spans residues Thr58 to Lys135. Position 67 is a phosphoserine (Ser67). Residues Thr69, Thr76, Thr84, and Thr92 each carry the phosphothreonine modification. Tandem repeats lie at residues Pro75–Ala82, Val83–Val90, and Ala91–Ile98. N6-acetyllysine is present on Lys96. Thr99 carries the post-translational modification Phosphothreonine. The stretch at Thr99–Ile104 is one 5; truncated repeat. The residue at position 102 (Lys102) is an N6-acetyllysine. Copy 6 of the repeat occupies Pro105–Ala112. Position 106 is a phosphothreonine (Thr106). An N6-acetyllysine mark is found at Lys109 and Lys116. Repeat copies occupy residues Pro120 to Ala127 and Ala128 to Lys135. At Thr121 the chain carries Phosphothreonine. Low complexity predominate over residues Thr121–Gly137. Position 124 is an N6-acetyllysine (Lys124). A phosphoserine mark is found at Ser145 and Ser157. Positions Ser145 to Glu170 are enriched in acidic residues. Residues Pro179–Ala188 are compositionally biased toward low complexity. A phosphoserine mark is found at Ser189 and Ser212. A compositionally biased stretch (acidic residues) spans Ser189–Met217. Thr220 bears the Phosphothreonine mark. The span at Glu241–Glu273 shows a compositional bias: acidic residues. Residues Met286–Gly302 are compositionally biased toward basic and acidic residues. Residue Lys299 forms a Glycyl lysine isopeptide (Lys-Gly) (interchain with G-Cter in SUMO1); alternate linkage. Lys299 participates in a covalent cross-link: Glycyl lysine isopeptide (Lys-Gly) (interchain with G-Cter in SUMO2); alternate. Ser303 bears the Phosphoserine mark. RRM domains follow at residues Phe309–Gly385 and Arg395–Glu468. The residue at position 320 (Lys320) is an N6-acetyllysine. Lys326 is covalently cross-linked (Glycyl lysine isopeptide (Lys-Gly) (interchain with G-Cter in SUMO1); alternate). A Glycyl lysine isopeptide (Lys-Gly) (interchain with G-Cter in SUMO2); alternate cross-link involves residue Lys326. Residue Lys350 is modified to N6-acetyllysine. Phosphoserine is present on Ser358. A Phosphothreonine modification is found at Thr369. Residue Lys372 forms a Glycyl lysine isopeptide (Lys-Gly) (interchain with G-Cter in SUMO2) linkage. Residue Lys379 forms a Glycyl lysine isopeptide (Lys-Gly) (interchain with G-Cter in SUMO2); alternate linkage. Residue Lys379 is modified to N6-acetyllysine; alternate. At Lys400 the chain carries N6-acetyllysine. Position 403 is a phosphoserine (Ser403). Thr407 is subject to Phosphothreonine. 2 positions are modified to N6-acetyllysine: Lys429 and Lys446. Ser460 and Ser462 each carry phosphoserine. Residues Lys469 and Lys478 each carry the N6-acetyllysine modification. 2 RRM domains span residues Lys487 to Ser561 and Lys569 to Pro644. Lys514 is covalently cross-linked (Glycyl lysine isopeptide (Lys-Gly) (interchain with G-Cter in SUMO2); alternate). Lys514 is modified (N6-acetyllysine; alternate). N6-acetyllysine is present on residues Lys522 and Lys569. Lys574 is covalently cross-linked (Glycyl lysine isopeptide (Lys-Gly) (interchain with G-Cter in SUMO2); alternate). Residue Lys574 is modified to N6-acetyllysine; alternate. Residue Ser577 is modified to Phosphoserine. Lys586 is covalently cross-linked (Glycyl lysine isopeptide (Lys-Gly) (interchain with G-Cter in SUMO1); alternate). Lys586 is covalently cross-linked (Glycyl lysine isopeptide (Lys-Gly) (interchain with G-Cter in SUMO2); alternate). Phosphoserine is present on residues Ser588 and Ser616. Lys621 participates in a covalent cross-link: Glycyl lysine isopeptide (Lys-Gly) (interchain with G-Cter in SUMO2). The tract at residues Leu639 to Glu707 is disordered. At Lys643 the chain carries N6-acetyllysine. The segment covering Glu647–Asp696 has biased composition (gly residues). Asymmetric dimethylarginine is present on residues Arg653, Arg657, Arg663, Arg667, Arg670, Arg676, Arg678, Arg684, and Arg688. At Arg691 the chain carries Asymmetric dimethylarginine; alternate. An Omega-N-methylarginine; alternate modification is found at Arg691.

In terms of assembly, identified in a IGF2BP1-dependent mRNP granule complex containing untranslated mRNAs. Component of the SWAP complex that consists of NPM1, NCL/nucleolin, PARP1 and SWAP70. Component of a complex which is at least composed of HTATSF1/Tat-SF1, the P-TEFb complex components CDK9 and CCNT1, RNA polymerase II, SUPT5H, and NCL/nucleolin. Interacts with AICDA. Interacts with APTX. Interacts with C1QBP. Interacts with ERBB4. Interacts (via C-terminus) with FMR1 isoform 6 (via N-terminus). Interacts with GZF1; this interaction is important for nucleolar localization of GZF1. Interacts with NSUN2. Interacts with NVL. Interacts (via N-terminus domain) with SETX. Interacts (via RRM1 and C-terminal RRM4/Arg/Gly-rich domains) with TERT; the interaction is important for nucleolar localization of TERT. Interacts with WDR46. Interacts with ZFP36. Interacts with LRRC34. Interacts with RRP1B. Interacts with HNRNPU; this interaction occurs during mitosis. Interacts with RIOK1; RIOK1 recruits NCL to PRMT5 for symmetrically methylation. Interacts with ZBTB7B. Interacts with MDK; this interaction promotes NCL clustering and lateral movements of this complex into lipid rafts leading to MDK internalization. Interacts with HDGF. Interacts with ALKBH2. Interacts with IGFBP5; this interaction is necessary for IGFBP5 localization to the nucleus. Interacts with DDX24 (when ubiquitinated); this interaction may be important during ribosome biogenesis. In terms of processing, some glutamate residues are glycylated by TTLL8. This modification occurs exclusively on glutamate residues and results in a glycine chain on the gamma-carboxyl group. Post-translationally, symmetrically methylated by PRMT5. Expressed in B-cells that have been induced to switch to various Ig isotypes.

The protein resides in the nucleus. It is found in the nucleolus. The protein localises to the cytoplasm. Nucleolin is the major nucleolar protein of growing eukaryotic cells. It is found associated with intranucleolar chromatin and pre-ribosomal particles. It induces chromatin decondensation by binding to histone H1. It is thought to play a role in pre-rRNA transcription and ribosome assembly. May play a role in the process of transcriptional elongation. Binds RNA oligonucleotides with 5'-UUAGGG-3' repeats more tightly than the telomeric single-stranded DNA 5'-TTAGGG-3' repeats. The protein is Nucleolin (Ncl) of Mus musculus (Mouse).